The chain runs to 622 residues: Glucose 1,6-bisphosphate synthase (622 aa).

Positions 73 and 175 each coordinate alpha-D-glucose 1,6-bisphosphate. Ser-175 functions as the Phosphoserine intermediate in the catalytic mechanism. 3 residues coordinate Mg(2+): Ser-175, Asp-332, and Asp-334. Ser-175 carries the phosphoserine modification. 5 residues coordinate alpha-D-glucose 1,6-bisphosphate: Asp-336, Arg-337, Glu-434, Ser-436, and Lys-448.

Belongs to the phosphohexose mutase family.

Its subcellular location is the cytoplasm. It is found in the cytosol. The enzyme catalyses (2R)-3-phospho-glyceroyl phosphate + alpha-D-glucose 1-phosphate = alpha-D-glucose 1,6-bisphosphate + (2R)-3-phosphoglycerate + H(+). It catalyses the reaction alpha-D-glucose 6-phosphate + (2R)-3-phospho-glyceroyl phosphate = alpha-D-glucose 1,6-bisphosphate + (2R)-3-phosphoglycerate + H(+). The catalysed reaction is (2R)-3-phospho-glyceroyl phosphate + alpha-D-ribose 1-phosphate = alpha-D-ribose 1,5-bisphosphate + (2R)-3-phosphoglycerate + H(+). It carries out the reaction 2-deoxy-alpha-D-ribose 1-phosphate + (2R)-3-phospho-glyceroyl phosphate = 2-deoxy-alpha-D-ribose 1,5-bisphosphate + (2R)-3-phosphoglycerate + H(+). The enzyme catalyses (2R)-3-phospho-glyceroyl phosphate + alpha-D-mannose 1-phosphate = alpha-D-mannose 1,6-bisphosphate + (2R)-3-phosphoglycerate + H(+). Its function is as follows. Glucose 1,6-bisphosphate synthase using 1,3-bisphosphoglycerate as a phosphate donor and a series of 1-phosphate sugars, including glucose 1-phosphate, mannose 1-phosphate, ribose 1-phosphate and deoxyribose 1-phosphate, as acceptors. In vitro, also exhibits very low phosphopentomutase and phosphoglucomutase activity which are most probably not physiologically relevant. The polypeptide is Glucose 1,6-bisphosphate synthase (Homo sapiens (Human)).